We begin with the raw amino-acid sequence, 163 residues long: Phosphopantetheine adenylyltransferase (163 aa).

Substrate is bound at residue Ser-11. ATP-binding positions include 11 to 12 (SF) and His-19. Residues Lys-43, Leu-75, and Arg-89 each contribute to the substrate site. Residues 90 to 92 (GLR), Glu-100, and 125 to 131 (YSFLSSS) contribute to the ATP site.

It belongs to the bacterial CoaD family. Homohexamer. Mg(2+) serves as cofactor.

The protein resides in the cytoplasm. It catalyses the reaction (R)-4'-phosphopantetheine + ATP + H(+) = 3'-dephospho-CoA + diphosphate. It functions in the pathway cofactor biosynthesis; coenzyme A biosynthesis; CoA from (R)-pantothenate: step 4/5. Reversibly transfers an adenylyl group from ATP to 4'-phosphopantetheine, yielding dephospho-CoA (dPCoA) and pyrophosphate. This Lysinibacillus sphaericus (strain C3-41) protein is Phosphopantetheine adenylyltransferase.